The sequence spans 318 residues: Porphobilinogen deaminase (318 aa).

Cys245 carries the post-translational modification S-(dipyrrolylmethanemethyl)cysteine.

The protein belongs to the HMBS family. In terms of assembly, monomer. Requires dipyrromethane as cofactor.

It catalyses the reaction 4 porphobilinogen + H2O = hydroxymethylbilane + 4 NH4(+). The protein operates within porphyrin-containing compound metabolism; protoporphyrin-IX biosynthesis; coproporphyrinogen-III from 5-aminolevulinate: step 2/4. It participates in porphyrin-containing compound metabolism; chlorophyll biosynthesis. Functionally, tetrapolymerization of the monopyrrole PBG into the hydroxymethylbilane pre-uroporphyrinogen in several discrete steps. The sequence is that of Porphobilinogen deaminase from Prochlorococcus marinus (strain MIT 9215).